A 215-amino-acid polypeptide reads, in one-letter code: Cytochrome b6 (215 aa).

Residues 32-52 traverse the membrane as a helical segment; the sequence is IFYCLGGITLTCFLVQVATGF. Cys-35 is a binding site for heme c. Heme b-binding residues include His-86 and His-100. Helical transmembrane passes span 90–110, 116–136, and 186–206; these read ASMM…TGGF, LTWV…VTGY, and LHTF…FPMI. Heme b-binding residues include His-187 and His-202.

The protein belongs to the cytochrome b family. PetB subfamily. In terms of assembly, the 4 large subunits of the cytochrome b6-f complex are cytochrome b6, subunit IV (17 kDa polypeptide, PetD), cytochrome f and the Rieske protein, while the 4 small subunits are PetG, PetL, PetM and PetN. The complex functions as a dimer. It depends on heme b as a cofactor. Heme c is required as a cofactor.

It localises to the plastid. It is found in the chloroplast thylakoid membrane. Its function is as follows. Component of the cytochrome b6-f complex, which mediates electron transfer between photosystem II (PSII) and photosystem I (PSI), cyclic electron flow around PSI, and state transitions. This chain is Cytochrome b6, found in Populus alba (White poplar).